The sequence spans 706 residues: Ribosomal RNA large subunit methyltransferase K/L (706 aa).

In terms of domain architecture, THUMP spans 43–154 (LMYQSLLWSR…RDMASVALDL (112 aa)).

The protein belongs to the methyltransferase superfamily. RlmKL family.

The protein resides in the cytoplasm. It catalyses the reaction guanosine(2445) in 23S rRNA + S-adenosyl-L-methionine = N(2)-methylguanosine(2445) in 23S rRNA + S-adenosyl-L-homocysteine + H(+). The catalysed reaction is guanosine(2069) in 23S rRNA + S-adenosyl-L-methionine = N(2)-methylguanosine(2069) in 23S rRNA + S-adenosyl-L-homocysteine + H(+). Specifically methylates the guanine in position 2445 (m2G2445) and the guanine in position 2069 (m7G2069) of 23S rRNA. The protein is Ribosomal RNA large subunit methyltransferase K/L of Yersinia pestis bv. Antiqua (strain Antiqua).